A 207-amino-acid chain; its full sequence is Large ribosomal subunit protein bL25 (207 aa).

The disordered stretch occupies residues 185 to 207; sequence DLEEETGEAAAEAEAPAEEGAES.

The protein belongs to the bacterial ribosomal protein bL25 family. CTC subfamily. In terms of assembly, part of the 50S ribosomal subunit; part of the 5S rRNA/L5/L18/L25 subcomplex. Contacts the 5S rRNA. Binds to the 5S rRNA independently of L5 and L18.

In terms of biological role, this is one of the proteins that binds to the 5S RNA in the ribosome where it forms part of the central protuberance. The protein is Large ribosomal subunit protein bL25 of Rhodococcus jostii (strain RHA1).